The primary structure comprises 216 residues: GTP cyclohydrolase 1 (216 aa).

Positions 109, 112, and 180 each coordinate Zn(2+).

Belongs to the GTP cyclohydrolase I family. Homomer.

The enzyme catalyses GTP + H2O = 7,8-dihydroneopterin 3'-triphosphate + formate + H(+). The protein operates within cofactor biosynthesis; 7,8-dihydroneopterin triphosphate biosynthesis; 7,8-dihydroneopterin triphosphate from GTP: step 1/1. This is GTP cyclohydrolase 1 from Tolumonas auensis (strain DSM 9187 / NBRC 110442 / TA 4).